Here is a 192-residue protein sequence, read N- to C-terminus: Ion-translocating oxidoreductase complex subunit A (192 aa).

6 helical membrane passes run 5 to 25, 39 to 59, 72 to 92, 102 to 122, 134 to 154, and 171 to 191; these read LLLL…FLGL, IGMS…SYLV, LRTM…EMLV, ALGI…VALL, AIYG…FSAM, and AIAM…TGLV.

It belongs to the NqrDE/RnfAE family. In terms of assembly, the complex is composed of six subunits: RnfA, RnfB, RnfC, RnfD, RnfE and RnfG.

It localises to the cell inner membrane. Part of a membrane-bound complex that couples electron transfer with translocation of ions across the membrane. The chain is Ion-translocating oxidoreductase complex subunit A from Shewanella loihica (strain ATCC BAA-1088 / PV-4).